The chain runs to 50 residues: MIPTGEKIHLLIKGSSSANIPCELKSRSKLSPVTNGGKTIGKSNKVSKND.

Residues 28-50 (SKLSPVTNGGKTIGKSNKVSKND) form a disordered region. Positions 29 to 50 (KLSPVTNGGKTIGKSNKVSKND) are enriched in polar residues.

This is an uncharacterized protein from Haemophilus influenzae (strain ATCC 51907 / DSM 11121 / KW20 / Rd).